The sequence spans 1480 residues: Cystic fibrosis transmembrane conductance regulator (1480 aa).

Residues 1 to 77 are Cytoplasmic-facing; that stretch reads MQRSPLEKAS…KLINALRRCF (77 aa). The chain crosses the membrane as a helical span at residues 78–98; sequence FWRFMFYGIFLYLGEVTKAVQ. The ABC transmembrane type-1 1 domain maps to 81–365; it reads FMFYGIFLYL…WAVQTWYDSL (285 aa). Topologically, residues 99–122 are extracellular; that stretch reads PLLLGRIIASYDPDNKEERSIAIY. A helical transmembrane segment spans residues 123–146; the sequence is LGIGLCLLFIVRTLLLHPAIFGLH. At 147–195 the chain is on the cytoplasmic side; the sequence is HIGMQMRIAMFSLIYKKTLKLSSRVLDKISIGQLVSLLSNNLNKFDEGL. The chain crosses the membrane as a helical span at residues 196–216; sequence ALAHFVWIAPLQVALLMGLIW. At 217 to 222 the chain is on the extracellular side; that stretch reads ELLQAS. Residues 223 to 243 traverse the membrane as a helical segment; it reads AFCGLGFLIVLALFQAGLGRM. Residues 244 to 298 lie on the Cytoplasmic side of the membrane; the sequence is MMKYRDQRAGKISERLVITSEMIENIQSVKAYCWEEAMEKMIENLRQTELKLTRK. The chain crosses the membrane as a helical span at residues 299 to 319; it reads AAYVRYFNSSAFFFSGFFVVF. Over 320 to 339 the chain is Extracellular; the sequence is LSVLPYALIKGIVLRKIFTT. A helical membrane pass occupies residues 340-358; the sequence is ISFCIVLRMAVTRQFPWAV. The Cytoplasmic segment spans residues 359-858; the sequence is QTWYDSLGAI…YLRYITVHKS (500 aa). ATP-binding positions include Trp401, Ser434, 458 to 465, and Gln493; that span reads GSTGAGKT. The 224-residue stretch at 423–646 folds into the ABC transporter 1 domain; it reads NGDDSLFFSN…RPDFSSKLMG (224 aa). Residue Cys524 is the site of S-palmitoyl cysteine attachment. Phosphoserine occurs at positions 549 and 660. The interval 654–831 is disordered R region; the sequence is SAERRNSILT…EEINEEDLKE (178 aa). The residue at position 670 (Ser670) is a Phosphoserine; by PKA. Ser686 is subject to Phosphoserine. Lys688 participates in a covalent cross-link: Glycyl lysine isopeptide (Lys-Gly) (interchain with G-Cter in ubiquitin). A phosphoserine mark is found at Ser700 and Ser712. A Phosphothreonine modification is found at Thr717. Phosphoserine is present on residues Ser737, Ser753, Ser768, Ser790, Ser795, and Ser813. The helical transmembrane segment at 859–879 threads the bilayer; it reads LIFVLIWCLVIFLAEVAASLV. The ABC transmembrane type-1 2 domain occupies 859-1155; it reads LIFVLIWCLV…AVNSSIDVDS (297 aa). Residues 880 to 918 are Extracellular-facing; it reads VLWLLGNTPLQDKGNSTHSRNNSYAVIITSTSSYYVFYI. N-linked (GlcNAc...) asparagine glycans are attached at residues Asn894 and Asn900. The discontinuously helical transmembrane segment at 919–939 threads the bilayer; sequence YVGVADTLLAMGFFRGLPLVH. The Cytoplasmic segment spans residues 940–990; it reads TLITVSKILHHKMLHSVLQAPMSTLNTLKAGGILNRFSKDIAILDDLLPLT. The helical transmembrane segment at 991–1011 threads the bilayer; sequence IFDFIQLLLIVIGAIAVVAVL. Topologically, residues 1012–1013 are extracellular; that stretch reads QP. The helical transmembrane segment at 1014 to 1034 threads the bilayer; the sequence is YIFVATVPVIVAFIMLRAYFL. Topologically, residues 1035–1095 are cytoplasmic; the sequence is QTSQQLKQLE…TANWFLYLST (61 aa). The chain crosses the membrane as a helical span at residues 1096–1116; sequence LRWFQMRIEMIFVMFFIAVTF. Topologically, residues 1117–1130 are extracellular; sequence ISILTTGEGEGRIG. The chain crosses the membrane as a helical span at residues 1131–1151; the sequence is IILTLAMNIMSTLQWAVNSSI. The Cytoplasmic portion of the chain corresponds to 1152 to 1480; sequence DVDSLMRSVS…TEEEVQDTRL (329 aa). Residues 1210–1443 enclose the ABC transporter 2 domain; that stretch reads MTVKDLSAKY…RSLFRQAISP (234 aa). ATP contacts are provided by residues Tyr1219 and 1244 to 1251; that span reads GRTGSGKS. An interaction with GORASP2 region spans residues 1386 to 1480; that stretch reads RTLKQAFADC…TEEEVQDTRL (95 aa). Residue Cys1395 is the site of S-palmitoyl cysteine attachment. Ser1444 and Ser1456 each carry phosphoserine. The segment at 1451–1480 is disordered; that stretch reads PHRNSSKGKSQPQIAALKEETEEEVQDTRL. The segment covering 1470–1480 has biased composition (acidic residues); the sequence is ETEEEVQDTRL. Positions 1478 to 1480 match the PDZ-binding motif; that stretch reads TRL.

Belongs to the ABC transporter superfamily. ABCC family. CFTR transporter (TC 3.A.1.202) subfamily. In terms of assembly, monomer; does not require oligomerization for channel activity. May form oligomers in the membrane. Interacts with SLC26A3, SLC26A6 and NHERF1. Interacts with SHANK2. Interacts with MYO6. Interacts (via C-terminus) with GOPC (via PDZ domain); this promotes CFTR internalization and thereby decreases channel activity. Interacts with SLC4A7 through NHERF1. Found in a complex with MYO5B and RAB11A. Interacts with ANO1. Interacts with SLC26A8. Interacts with AHCYL1; the interaction increases CFTR activity. Interacts with CSE1L. The core-glycosylated form interacts with GORASP2 (via PDZ GRASP-type 1 domain) in respone to ER stress. Interacts with MARCHF2; the interaction leads to CFTR ubiqtuitination and degradation. Interacts with ADGRG2. In terms of processing, N-glycosylated. Phosphorylated; cAMP treatment promotes phosphorylation and activates the channel. Dephosphorylation decreases the ATPase activity (in vitro). Phosphorylation at PKA sites activates the channel. Phosphorylation at PKC sites enhances the response to phosphorylation by PKA. Phosphorylated by AMPK; this inhibits channel activity. Post-translationally, ubiquitinated, leading to its degradation in the lysosome. Deubiquitination by USP10 in early endosomes enhances its endocytic recycling to the cell membrane. Ubiquitinated by RNF185 during ER stress. Ubiquitinated by MARCHF2.

Its subcellular location is the apical cell membrane. The protein localises to the early endosome membrane. It is found in the cell membrane. It localises to the recycling endosome membrane. The protein resides in the endoplasmic reticulum membrane. Its subcellular location is the nucleus. The catalysed reaction is ATP + H2O + closed Cl(-) channel = ADP + phosphate + open Cl(-) channel.. It catalyses the reaction chloride(in) = chloride(out). The enzyme catalyses hydrogencarbonate(in) = hydrogencarbonate(out). It carries out the reaction ATP + H2O = ADP + phosphate + H(+). In terms of biological role, epithelial ion channel that plays an important role in the regulation of epithelial ion and water transport and fluid homeostasis. Mediates the transport of chloride ions across the cell membrane. Possesses an intrinsic ATPase activity and utilizes ATP to gate its channel; the passive flow of anions through the channel is gated by cycles of ATP binding and hydrolysis by the ATP-binding domains. The ion channel is also permeable to HCO(3)(-); selectivity depends on the extracellular chloride concentration. Exerts its function also by modulating the activity of other ion channels and transporters. Contributes to the regulation of the pH and the ion content of the epithelial fluid layer. Modulates the activity of the epithelial sodium channel (ENaC) complex, in part by regulating the cell surface expression of the ENaC complex. May regulate bicarbonate secretion and salvage in epithelial cells by regulating the transporter SLC4A7. Can inhibit the chloride channel activity of ANO1. Plays a role in the chloride and bicarbonate homeostasis during sperm epididymal maturation and capacitation. The chain is Cystic fibrosis transmembrane conductance regulator from Nomascus leucogenys (Northern white-cheeked gibbon).